The following is a 1484-amino-acid chain: Chromosome partition protein MukB (1484 aa).

An ATP-binding site is contributed by 34–41 (GGNGAGKS). Coiled coils occupy residues 326 to 418 (LEAD…QYNQ), 444 to 472 (LDTFQAKEQEATEKLLSLEQKMSVAQTAH), and 509 to 602 (RHLA…QRAP). The tract at residues 666 to 783 (PGGAEDQRLN…SLPIFGRAAR (118 aa)) is flexible hinge. 3 coiled-coil regions span residues 835–923 (EAEI…AKLE), 977–1116 (EMLS…AKAG), and 1209–1265 (VEAI…LQSV). The interval 1049–1074 (ADSGAEERARQRRDELHAQLSNNRSR) is disordered. Basic and acidic residues predominate over residues 1051–1065 (SGAEERARQRRDELH).

Belongs to the SMC family. MukB subfamily. In terms of assembly, homodimerization via its hinge domain. Binds to DNA via its C-terminal region. Interacts, and probably forms a ternary complex, with MukE and MukF via its C-terminal region. The complex formation is stimulated by calcium or magnesium. Interacts with tubulin-related protein FtsZ.

The protein localises to the cytoplasm. Its subcellular location is the nucleoid. Functionally, plays a central role in chromosome condensation, segregation and cell cycle progression. Functions as a homodimer, which is essential for chromosome partition. Involved in negative DNA supercoiling in vivo, and by this means organize and compact chromosomes. May achieve or facilitate chromosome segregation by condensation DNA from both sides of a centrally located replisome during cell division. The chain is Chromosome partition protein MukB from Salmonella dublin (strain CT_02021853).